The primary structure comprises 312 residues: DDRGK domain-containing protein 1 (312 aa).

The Lumenal segment spans residues 1–2; sequence ME. The helical transmembrane segment at 3–23 threads the bilayer; that stretch reads LIILVGIATALLVVIITLYLL. The Cytoplasmic segment spans residues 24–312; that stretch reads QKKNAAPETK…ISAGGEEASS (289 aa). Low complexity predominate over residues 59–79; sequence NQRNRLRQNAPAAPAGQVAPA. The segment at 59-162 is disordered; that stretch reads NQRNRLRQNA…RKHQEDLEAE (104 aa). Residues 110-162 are compositionally biased toward basic and acidic residues; it reads LDEKMGAKKRAKMEAKEQKRLQREQELHDREQRKVKEAKEEAERKHQEDLEAE.

It belongs to the DDRGK1 family. Interacts with Atg9; the interaction is transient.

The protein localises to the endoplasmic reticulum membrane. In terms of biological role, substrate adapter for ufmylation, the covalent attachment of the ubiquitin-like modifier UFM1 to substrate proteins. Required for ufmylation of Atg9; protects the nervous system during aging, possibly by stabilizing Atg9 and supporting its function. This is DDRGK domain-containing protein 1 from Drosophila yakuba (Fruit fly).